We begin with the raw amino-acid sequence, 304 residues long: tRNA-uridine aminocarboxypropyltransferase 1 (304 aa).

Residue S2 is modified to N-acetylserine. A DXTW motif is present at residues 206-209 (DSTW).

This sequence belongs to the TDD superfamily. DTWD1 family.

The protein localises to the nucleus. It catalyses the reaction a uridine in tRNA + S-adenosyl-L-methionine = a 3-[(3S)-3-amino-3-carboxypropyl]uridine in tRNA + S-methyl-5'-thioadenosine + H(+). Functionally, catalyzes the formation of 3-(3-amino-3-carboxypropyl)uridine (acp3U) at position 20 in the D-loop of several cytoplasmic tRNAs (acp3U(20)). The polypeptide is tRNA-uridine aminocarboxypropyltransferase 1 (Homo sapiens (Human)).